The chain runs to 429 residues: Glutamyl-tRNA reductase (429 aa).

Substrate-binding positions include 49-52 (TCNR), serine 107, 112-114 (EPQ), and glutamine 118. Cysteine 50 functions as the Nucleophile in the catalytic mechanism. 187–192 (GAGKTI) lines the NADP(+) pocket.

It belongs to the glutamyl-tRNA reductase family. As to quaternary structure, homodimer.

The enzyme catalyses (S)-4-amino-5-oxopentanoate + tRNA(Glu) + NADP(+) = L-glutamyl-tRNA(Glu) + NADPH + H(+). It functions in the pathway porphyrin-containing compound metabolism; protoporphyrin-IX biosynthesis; 5-aminolevulinate from L-glutamyl-tRNA(Glu): step 1/2. Functionally, catalyzes the NADPH-dependent reduction of glutamyl-tRNA(Glu) to glutamate 1-semialdehyde (GSA). This Marinobacter nauticus (strain ATCC 700491 / DSM 11845 / VT8) (Marinobacter aquaeolei) protein is Glutamyl-tRNA reductase.